We begin with the raw amino-acid sequence, 481 residues long: Ribulose bisphosphate carboxylase large chain (481 aa).

The propeptide occupies 1-2; it reads MS. The residue at position 3 (Pro3) is an N-acetylproline. Lys14 carries the N6,N6,N6-trimethyllysine modification. Positions 123 and 173 each coordinate substrate. Lys175 (proton acceptor) is an active-site residue. Substrate is bound at residue Lys177. The Mg(2+) site is built by Lys201, Asp203, and Glu204. At Lys201 the chain carries N6-carboxylysine. His294 acts as the Proton acceptor in catalysis. Substrate is bound by residues Arg295, His327, and Ser379.

The protein belongs to the RuBisCO large chain family. Type I subfamily. In terms of assembly, heterohexadecamer of 8 large chains and 8 small chains; disulfide-linked. The disulfide link is formed within the large subunit homodimers. Mg(2+) is required as a cofactor. The disulfide bond which can form in the large chain dimeric partners within the hexadecamer appears to be associated with oxidative stress and protein turnover.

It localises to the plastid. It carries out the reaction 2 (2R)-3-phosphoglycerate + 2 H(+) = D-ribulose 1,5-bisphosphate + CO2 + H2O. It catalyses the reaction D-ribulose 1,5-bisphosphate + O2 = 2-phosphoglycolate + (2R)-3-phosphoglycerate + 2 H(+). RuBisCO catalyzes two reactions: the carboxylation of D-ribulose 1,5-bisphosphate, the primary event in carbon dioxide fixation, as well as the oxidative fragmentation of the pentose substrate in the photorespiration process. Both reactions occur simultaneously and in competition at the same active site. This chain is Ribulose bisphosphate carboxylase large chain, found in Cuscuta obtusiflora (Peruvian dodder).